The primary structure comprises 248 residues: Ubiquinone biosynthesis O-methyltransferase (248 aa).

Residues R40, G71, D92, and M135 each contribute to the S-adenosyl-L-methionine site.

It belongs to the methyltransferase superfamily. UbiG/COQ3 family.

It catalyses the reaction a 3-demethylubiquinol + S-adenosyl-L-methionine = a ubiquinol + S-adenosyl-L-homocysteine + H(+). It carries out the reaction a 3-(all-trans-polyprenyl)benzene-1,2-diol + S-adenosyl-L-methionine = a 2-methoxy-6-(all-trans-polyprenyl)phenol + S-adenosyl-L-homocysteine + H(+). It participates in cofactor biosynthesis; ubiquinone biosynthesis. Its function is as follows. O-methyltransferase that catalyzes the 2 O-methylation steps in the ubiquinone biosynthetic pathway. The protein is Ubiquinone biosynthesis O-methyltransferase of Roseobacter denitrificans (strain ATCC 33942 / OCh 114) (Erythrobacter sp. (strain OCh 114)).